The chain runs to 65 residues: Putative beta-neurotoxin RjAa2 (65 aa).

Residues 1–64 enclose the LCN-type CS-alpha/beta domain; it reads KEGYPMGRDG…VWDSSTNKCG (64 aa). Disulfide bonds link C11/C63, C15/C37, C22/C44, and C26/C46.

This sequence belongs to the long (4 C-C) scorpion toxin superfamily. Sodium channel inhibitor family. Beta subfamily. As to expression, expressed by the venom gland.

It is found in the secreted. Functionally, beta toxins bind voltage-independently at site-4 of sodium channels (Nav) and shift the voltage of activation toward more negative potentials thereby affecting sodium channel activation and promoting spontaneous and repetitive firing. The chain is Putative beta-neurotoxin RjAa2 from Rhopalurus junceus (Caribbean blue scorpion).